The primary structure comprises 564 residues: Ubiquitin carboxyl-terminal hydrolase 39 (564 aa).

The interval 1-96 (MSSRSKRQSH…VRAKNGRVDS (96 aa)) is disordered. Positions 28-39 (IKKERDREKEPE) are enriched in basic and acidic residues. Position 46 is a phosphoserine (S46). Residue K51 forms a Glycyl lysine isopeptide (Lys-Gly) (interchain with G-Cter in SUMO2) linkage. Low complexity predominate over residues 59-69 (REVPAPALPVV). S81 is modified (phosphoserine). Residues 84 to 96 (EREVRAKNGRVDS) show a composition bias toward basic and acidic residues. A UBP-type; degenerate zinc finger spans residues 102-199 (RHCPYLDTIN…YVLKPTFTKQ (98 aa)). Residues C135, C138, H154, and H160 each coordinate Zn(2+). Positions 224–554 (VGLNNIKAND…EAYIQIWKRR (331 aa)) constitute a USP domain.

It belongs to the peptidase C19 family. In terms of assembly, the U4/U6-U5 tri-snRNP complex is a building block of the precatalytic spliceosome (spliceosome B complex). Component of the U4/U6-U5 tri-snRNP complex composed of the U4, U6 and U5 snRNAs and at least PRPF3, PRPF4, PRPF6, PRPF8, PRPF31, SNRNP200, TXNL4A, SNRNP40, SNRPB, SNRPD1, SNRPD2, SNRPD3, SNRPE, SNRPF, SNRPG, DDX23, CD2BP2, PPIH, SNU13, EFTUD2, SART1 and USP39, plus LSM2, LSM3, LSM4, LSM5, LSM6, LSM7 and LSM8.

It localises to the nucleus. The catalysed reaction is Thiol-dependent hydrolysis of ester, thioester, amide, peptide and isopeptide bonds formed by the C-terminal Gly of ubiquitin (a 76-residue protein attached to proteins as an intracellular targeting signal).. In terms of biological role, deubiquitinating enzyme that plays a role in many cellular processes including cellular antiviral response, epithelial morphogenesis, DNA repair or B-cell development. Plays a role in pre-mRNA splicing as a component of the U4/U6-U5 tri-snRNP, one of the building blocks of the precatalytic spliceosome. Specifically regulates immunoglobulin gene rearrangement in a spliceosome-dependent manner, which involves modulating chromatin interactions at the Igh locus and therefore plays an essential role in B-cell development. Regulates AURKB mRNA levels, and thereby plays a role in cytokinesis and in the spindle checkpoint. Regulates apoptosis and G2/M cell cycle checkpoint in response to DNA damage by deubiquitinating and stabilizing CHK2. Also plays an important role in DNA repair by controlling the recruitment of XRCC4/LIG4 to DNA double-strand breaks for non-homologous end-joining repair. Participates in antiviral activity by affecting the type I IFN signaling by stabilizing STAT1 and decreasing its 'Lys-6'-linked ubiquitination. Contributes to non-canonical Wnt signaling during epidermal differentiation. Acts as a negative regulator NF-kappa-B activation through deubiquitination of 'Lys-48'-linked ubiquitination of NFKBIA. The chain is Ubiquitin carboxyl-terminal hydrolase 39 from Mus musculus (Mouse).